A 161-amino-acid chain; its full sequence is SsrA-binding protein (161 aa).

This sequence belongs to the SmpB family.

It is found in the cytoplasm. In terms of biological role, required for rescue of stalled ribosomes mediated by trans-translation. Binds to transfer-messenger RNA (tmRNA), required for stable association of tmRNA with ribosomes. tmRNA and SmpB together mimic tRNA shape, replacing the anticodon stem-loop with SmpB. tmRNA is encoded by the ssrA gene; the 2 termini fold to resemble tRNA(Ala) and it encodes a 'tag peptide', a short internal open reading frame. During trans-translation Ala-aminoacylated tmRNA acts like a tRNA, entering the A-site of stalled ribosomes, displacing the stalled mRNA. The ribosome then switches to translate the ORF on the tmRNA; the nascent peptide is terminated with the 'tag peptide' encoded by the tmRNA and targeted for degradation. The ribosome is freed to recommence translation, which seems to be the essential function of trans-translation. The protein is SsrA-binding protein of Haemophilus influenzae (strain 86-028NP).